The chain runs to 206 residues: MMQRNSNNTSITSNISNNSSSHQACASCKHQRKKCNNECILSPYFPARKTKEFQAVHKVFGVSNVQKMVRTVREEDRTKLSDSLTWEALWRQKDPVLGSYGEYRRICEELKLYKSLVHNQPLIGWDNNQRVFNNNSNNKNGLAMTNSSGSGGFSVNNNGVGVNREIVNGGYASRNVQGGWENLKHDQRQQCYAVINNGFKQHYLPL.

Residues Met1–Ser20 are disordered. Positions Gln23–Ile123 constitute an LOB domain.

This sequence belongs to the LOB domain-containing protein family.

This is LOB domain-containing protein 2 (LBD2) from Arabidopsis thaliana (Mouse-ear cress).